A 365-amino-acid polypeptide reads, in one-letter code: Peptide chain release factor 2 (365 aa).

The residue at position 251 (Gln251) is an N5-methylglutamine.

The protein belongs to the prokaryotic/mitochondrial release factor family. Post-translationally, methylated by PrmC. Methylation increases the termination efficiency of RF2.

It localises to the cytoplasm. Its function is as follows. Peptide chain release factor 2 directs the termination of translation in response to the peptide chain termination codons UGA and UAA. The protein is Peptide chain release factor 2 of Sulfurimonas denitrificans (strain ATCC 33889 / DSM 1251) (Thiomicrospira denitrificans (strain ATCC 33889 / DSM 1251)).